The sequence spans 311 residues: Light-independent protochlorophyllide reductase iron-sulfur ATP-binding protein (311 aa).

Residues 10 to 15 (GIGKST) and K39 contribute to the ATP site. Mg(2+) is bound at residue S14. [4Fe-4S] cluster-binding residues include C95 and C129. 180–181 (NR) lines the ATP pocket.

This sequence belongs to the NifH/BchL/ChlL family. In terms of assembly, homodimer. Protochlorophyllide reductase is composed of three subunits; ChlL, ChlN and ChlB. Requires [4Fe-4S] cluster as cofactor.

It localises to the plastid. The protein localises to the chloroplast. It catalyses the reaction chlorophyllide a + oxidized 2[4Fe-4S]-[ferredoxin] + 2 ADP + 2 phosphate = protochlorophyllide a + reduced 2[4Fe-4S]-[ferredoxin] + 2 ATP + 2 H2O. It functions in the pathway porphyrin-containing compound metabolism; chlorophyll biosynthesis (light-independent). Its function is as follows. Component of the dark-operative protochlorophyllide reductase (DPOR) that uses Mg-ATP and reduced ferredoxin to reduce ring D of protochlorophyllide (Pchlide) to form chlorophyllide a (Chlide). This reaction is light-independent. The L component serves as a unique electron donor to the NB-component of the complex, and binds Mg-ATP. The chain is Light-independent protochlorophyllide reductase iron-sulfur ATP-binding protein from Oltmannsiellopsis viridis (Marine flagellate).